The sequence spans 96 residues: Co-chaperonin GroES (96 aa).

Belongs to the GroES chaperonin family. Heptamer of 7 subunits arranged in a ring. Interacts with the chaperonin GroEL.

Its subcellular location is the cytoplasm. Its function is as follows. Together with the chaperonin GroEL, plays an essential role in assisting protein folding. The GroEL-GroES system forms a nano-cage that allows encapsulation of the non-native substrate proteins and provides a physical environment optimized to promote and accelerate protein folding. GroES binds to the apical surface of the GroEL ring, thereby capping the opening of the GroEL channel. The protein is Co-chaperonin GroES of Shewanella loihica (strain ATCC BAA-1088 / PV-4).